We begin with the raw amino-acid sequence, 277 residues long: Urease accessory protein UreD (277 aa).

The disordered stretch occupies residues 1 to 20; sequence MRQTAQEDASPAPMQRAHGT.

The protein belongs to the UreD family. In terms of assembly, ureD, UreF and UreG form a complex that acts as a GTP-hydrolysis-dependent molecular chaperone, activating the urease apoprotein by helping to assemble the nickel containing metallocenter of UreC. The UreE protein probably delivers the nickel.

Its subcellular location is the cytoplasm. In terms of biological role, required for maturation of urease via the functional incorporation of the urease nickel metallocenter. This Chelativorans sp. (strain BNC1) protein is Urease accessory protein UreD.